The following is a 136-amino-acid chain: Small ribosomal subunit protein bS6 (136 aa).

Positions 117–130 (EERSRSSRRQREDV) are enriched in basic and acidic residues. The segment at 117–136 (EERSRSSRRQREDVIEGVEL) is disordered.

It belongs to the bacterial ribosomal protein bS6 family.

In terms of biological role, binds together with bS18 to 16S ribosomal RNA. The sequence is that of Small ribosomal subunit protein bS6 from Bartonella quintana (strain Toulouse) (Rochalimaea quintana).